The following is a 100-amino-acid chain: Urease subunit gamma (100 aa).

This sequence belongs to the urease gamma subunit family. As to quaternary structure, heterotrimer of UreA (gamma), UreB (beta) and UreC (alpha) subunits. Three heterotrimers associate to form the active enzyme.

The protein resides in the cytoplasm. It catalyses the reaction urea + 2 H2O + H(+) = hydrogencarbonate + 2 NH4(+). The protein operates within nitrogen metabolism; urea degradation; CO(2) and NH(3) from urea (urease route): step 1/1. The protein is Urease subunit gamma of Allorhizobium ampelinum (strain ATCC BAA-846 / DSM 112012 / S4) (Agrobacterium vitis (strain S4)).